The primary structure comprises 450 residues: MFAARLFKAMPARASAFPSVNASIQSRFMATVRNGRVAHERATFTIRDGPIFHGKSFGARSNISGEAVFTTSLVGYPESLTDPSYRGQILVFTQPLIGNYGVPSAEKDQHGLLKYFESPHLQAAGVVVADVAEQYSHWTAVQSLGEWCAREGVPAISGVDTRAIVTYLREQGSSLARITVGEEYDADQDEAFVDPEQIHLVRQVSTKAPFHVSAADPQCHVAVIDCGVKENILRSLVSRGASITVFPYDYPIHKVAHHFDGVFISNGPGDPTHCQETAYHLRRLMETSQVPIFGICLGHQLLALAIGARTIKLKYGNRAHNIPALDMSTGRCHITSQNHGYAVDASTLPSDWKPYFVNLNDSSNEGMIHKTRPIFSTQFHPEAKGGPLDSSYLFDIYLDSVRKYKASQSAFHPTRDSLPSPLLVDLLAKERVGVQPTIGMQNVAAAAAAA.

Residues 1–29 constitute a mitochondrion transit peptide; the sequence is MFAARLFKAMPARASAFPSVNASIQSRFM. Positions 220-407 constitute a Glutamine amidotransferase type-1 domain; the sequence is HVAVIDCGVK…LDSVRKYKAS (188 aa). The Nucleophile role is filled by C296. Residues H380 and E382 contribute to the active site.

Belongs to the CarA family. In terms of assembly, heterodimer composed of 2 chains; the small (or glutamine) chain promotes the hydrolysis of glutamine to ammonia, which is used by the large (or ammonia) chain to synthesize carbamoyl phosphate.

The protein resides in the mitochondrion matrix. It carries out the reaction hydrogencarbonate + L-glutamine + 2 ATP + H2O = carbamoyl phosphate + L-glutamate + 2 ADP + phosphate + 2 H(+). It catalyses the reaction L-glutamine + H2O = L-glutamate + NH4(+). It functions in the pathway amino-acid biosynthesis; L-arginine biosynthesis; carbamoyl phosphate from bicarbonate: step 1/1. In terms of biological role, small subunit of the arginine-specific carbamoyl phosphate synthase (CPSase). CPSase catalyzes the formation of carbamoyl phosphate from the ammonia moiety of glutamine, carbonate, and phosphate donated by ATP, the first step of the arginine biosynthetic pathway. The small subunit (glutamine amidotransferase) binds and cleaves glutamine to supply the large subunit with the substrate ammonia. This is Carbamoyl phosphate synthase arginine-specific small chain (cpa1) from Aspergillus oryzae (strain ATCC 42149 / RIB 40) (Yellow koji mold).